The chain runs to 328 residues: Malate dehydrogenase (328 aa).

Gly-12–Gly-18 is an NAD(+) binding site. Substrate is bound by residues Arg-95 and Arg-101. NAD(+) is bound by residues Asn-108, Gln-115, and Val-132–Asn-134. 2 residues coordinate substrate: Asn-134 and Arg-165. Catalysis depends on His-190, which acts as the Proton acceptor.

This sequence belongs to the LDH/MDH superfamily. MDH type 2 family.

The enzyme catalyses (S)-malate + NAD(+) = oxaloacetate + NADH + H(+). Functionally, catalyzes the reversible oxidation of malate to oxaloacetate. The sequence is that of Malate dehydrogenase from Paracidovorax citrulli (strain AAC00-1) (Acidovorax citrulli).